A 224-amino-acid chain; its full sequence is Ribose-5-phosphate isomerase A 2 (224 aa).

Substrate is bound by residues S27–T30, D83–D86, and K96–G99. Catalysis depends on E105, which acts as the Proton acceptor. K123 lines the substrate pocket.

The protein belongs to the ribose 5-phosphate isomerase family. Homodimer.

The catalysed reaction is aldehydo-D-ribose 5-phosphate = D-ribulose 5-phosphate. Its pathway is carbohydrate degradation; pentose phosphate pathway; D-ribose 5-phosphate from D-ribulose 5-phosphate (non-oxidative stage): step 1/1. Its function is as follows. Catalyzes the reversible conversion of ribose-5-phosphate to ribulose 5-phosphate. This is Ribose-5-phosphate isomerase A 2 from Oceanobacillus iheyensis (strain DSM 14371 / CIP 107618 / JCM 11309 / KCTC 3954 / HTE831).